Reading from the N-terminus, the 590-residue chain is Threonine dehydratase biosynthetic, chloroplastic (590 aa).

The transit peptide at 1–44 directs the protein to the chloroplast; sequence MLSTSTTNSSILPFRSRASSSTFIARPPANFNSIFTTSVRVFPI. Lys-139 carries the N6-(pyridoxal phosphate)lysine modification. ACT-like domains are found at residues 416-488 and 509-580; these read ALLG…NISH and EVFV…IDQY.

Belongs to the serine/threonine dehydratase family. Requires pyridoxal 5'-phosphate as cofactor. As to expression, found at higher levels in flowers than in other organs.

Its subcellular location is the plastid. It is found in the chloroplast. It carries out the reaction L-threonine = 2-oxobutanoate + NH4(+). Its pathway is amino-acid biosynthesis; L-isoleucine biosynthesis; 2-oxobutanoate from L-threonine: step 1/1. Its activity is regulated as follows. Allosterically inhibited by isoleucine. The chain is Threonine dehydratase biosynthetic, chloroplastic from Cicer arietinum (Chickpea).